Here is a 117-residue protein sequence, read N- to C-terminus: SPbeta prophage-derived uncharacterized protein YosL (117 aa).

This chain is SPbeta prophage-derived uncharacterized protein YosL (yosL), found in Bacillus subtilis (strain 168).